We begin with the raw amino-acid sequence, 299 residues long: Probable lipid kinase YegS-like (299 aa).

In terms of domain architecture, DAGKc spans 2 to 133 (EKNPITLLIL…IDIAKVNDGH (132 aa)). Residues Thr40, 66 to 72 (GDGTVNE), and Thr95 contribute to the ATP site. Residues Leu215, Asp218, and Leu220 each coordinate Mg(2+). The active-site Proton acceptor is Glu271.

Belongs to the diacylglycerol/lipid kinase family. YegS lipid kinase subfamily. Requires Mg(2+) as cofactor. Ca(2+) serves as cofactor.

It localises to the cytoplasm. In terms of biological role, probably phosphorylates lipids; the in vivo substrate is unknown. The chain is Probable lipid kinase YegS-like from Pectobacterium atrosepticum (strain SCRI 1043 / ATCC BAA-672) (Erwinia carotovora subsp. atroseptica).